The primary structure comprises 21 residues: Brevinin-1OKb (21 aa).

At Lys-21 the chain carries Lysine amide.

Expressed by the skin glands.

The protein resides in the secreted. Antimicrobial peptide. This Nidirana okinavana (Kampira Falls frog) protein is Brevinin-1OKb.